Here is a 509-residue protein sequence, read N- to C-terminus: ATP synthase subunit alpha, mitochondrial (509 aa).

ATP is bound at residue 171-178 (GDRQTGKT).

This sequence belongs to the ATPase alpha/beta chains family. As to quaternary structure, F-type ATPases have 2 components, CF(1) - the catalytic core - and CF(0) - the membrane proton channel. CF(1) has five subunits: alpha(3), beta(3), gamma(1), delta(1), epsilon(1). CF(0) has three main subunits: a, b and c.

The protein resides in the mitochondrion. It localises to the mitochondrion inner membrane. Functionally, mitochondrial membrane ATP synthase (F(1)F(0) ATP synthase or Complex V) produces ATP from ADP in the presence of a proton gradient across the membrane which is generated by electron transport complexes of the respiratory chain. F-type ATPases consist of two structural domains, F(1) - containing the extramembraneous catalytic core, and F(0) - containing the membrane proton channel, linked together by a central stalk and a peripheral stalk. During catalysis, ATP synthesis in the catalytic domain of F(1) is coupled via a rotary mechanism of the central stalk subunits to proton translocation. Subunits alpha and beta form the catalytic core in F(1). Rotation of the central stalk against the surrounding alpha(3)beta(3) subunits leads to hydrolysis of ATP in three separate catalytic sites on the beta subunits. Subunit alpha does not bear the catalytic high-affinity ATP-binding sites. In Triticum aestivum (Wheat), this protein is ATP synthase subunit alpha, mitochondrial (ATPA).